The following is a 351-amino-acid chain: Glycerol-1-phosphate dehydrogenase [NAD(P)+] (351 aa).

NAD(+) contacts are provided by residues 97–101 and 119–122; these read GKVID and TSPS. D124 contacts substrate. S128 is an NAD(+) binding site. D171 serves as a coordination point for substrate. Residues D171 and H251 each contribute to the Zn(2+) site. H255 is a substrate binding site. H267 is a Zn(2+) binding site.

It belongs to the glycerol-1-phosphate dehydrogenase family. Homodimer. Zn(2+) serves as cofactor.

It is found in the cytoplasm. It carries out the reaction sn-glycerol 1-phosphate + NAD(+) = dihydroxyacetone phosphate + NADH + H(+). It catalyses the reaction sn-glycerol 1-phosphate + NADP(+) = dihydroxyacetone phosphate + NADPH + H(+). It functions in the pathway membrane lipid metabolism; glycerophospholipid metabolism. In terms of biological role, catalyzes the NAD(P)H-dependent reduction of dihydroxyacetonephosphate (DHAP or glycerone phosphate) to glycerol 1-phosphate (G1P). The G1P thus generated is used as the glycerophosphate backbone of phospholipids in the cellular membranes of Archaea. This chain is Glycerol-1-phosphate dehydrogenase [NAD(P)+], found in Saccharolobus islandicus (strain Y.N.15.51 / Yellowstone #2) (Sulfolobus islandicus).